A 126-amino-acid polypeptide reads, in one-letter code: Small ribosomal subunit protein uS13 (126 aa).

The disordered stretch occupies residues 92 to 126 (HRMGLPVRGQRTRTNARTRRGRRQTVAGKKKAPGK). Residues 101 to 126 (QRTRTNARTRRGRRQTVAGKKKAPGK) are compositionally biased toward basic residues.

The protein belongs to the universal ribosomal protein uS13 family. As to quaternary structure, part of the 30S ribosomal subunit. Forms a loose heterodimer with protein S19. Forms two bridges to the 50S subunit in the 70S ribosome.

Located at the top of the head of the 30S subunit, it contacts several helices of the 16S rRNA. In the 70S ribosome it contacts the 23S rRNA (bridge B1a) and protein L5 of the 50S subunit (bridge B1b), connecting the 2 subunits; these bridges are implicated in subunit movement. Contacts the tRNAs in the A and P-sites. This is Small ribosomal subunit protein uS13 from Nostoc punctiforme (strain ATCC 29133 / PCC 73102).